A 185-amino-acid polypeptide reads, in one-letter code: GTP-dependent dephospho-CoA kinase (185 aa).

5 residues coordinate GTP: aspartate 50, valine 52, aspartate 73, lysine 75, and glutamate 128.

This sequence belongs to the GTP-dependent DPCK family.

The enzyme catalyses 3'-dephospho-CoA + GTP = GDP + CoA + H(+). It functions in the pathway cofactor biosynthesis; coenzyme A biosynthesis. Its function is as follows. Catalyzes the GTP-dependent phosphorylation of the 3'-hydroxyl group of dephosphocoenzyme A to form coenzyme A (CoA). The chain is GTP-dependent dephospho-CoA kinase from Aeropyrum pernix (strain ATCC 700893 / DSM 11879 / JCM 9820 / NBRC 100138 / K1).